Reading from the N-terminus, the 137-residue chain is Peptide methionine sulfoxide reductase MsrB (137 aa).

Residues alanine 7 to glycine 129 enclose the MsrB domain. Cysteine 46, cysteine 49, cysteine 95, and cysteine 98 together coordinate Zn(2+). Cysteine 118 serves as the catalytic Nucleophile.

The protein belongs to the MsrB Met sulfoxide reductase family. The cofactor is Zn(2+).

It carries out the reaction L-methionyl-[protein] + [thioredoxin]-disulfide + H2O = L-methionyl-(R)-S-oxide-[protein] + [thioredoxin]-dithiol. The protein is Peptide methionine sulfoxide reductase MsrB of Escherichia coli O45:K1 (strain S88 / ExPEC).